The following is a 1070-amino-acid chain: DNA-directed RNA polymerase subunit beta (1070 aa).

Belongs to the RNA polymerase beta chain family. As to quaternary structure, in plastids the minimal PEP RNA polymerase catalytic core is composed of four subunits: alpha, beta, beta', and beta''. When a (nuclear-encoded) sigma factor is associated with the core the holoenzyme is formed, which can initiate transcription.

The protein resides in the plastid. It localises to the chloroplast. It carries out the reaction RNA(n) + a ribonucleoside 5'-triphosphate = RNA(n+1) + diphosphate. Functionally, DNA-dependent RNA polymerase catalyzes the transcription of DNA into RNA using the four ribonucleoside triphosphates as substrates. The protein is DNA-directed RNA polymerase subunit beta of Daucus carota (Wild carrot).